The chain runs to 413 residues: Monacolin J acid methylbutanoyltransferase (413 aa).

Arginine 73 provides a ligand contact to monacolin J. Serine 76 acts as the Acyl-ester intermediate in catalysis. 3 residues coordinate monacolin J: arginine 173, tyrosine 188, and tyrosine 258. Residue glycine 366 participates in 2-methylbutanoate binding. Monacolin J is bound by residues glutamate 388 and tryptophan 390.

It belongs to the class-A beta-lactamase family. In terms of assembly, interacts with LovF.

It carries out the reaction monacolin J carboxylate + (S)-2-methylbutanoyl-[2-methylbutanoate polyketide synthase] = lovastatin carboxylate + holo-[2-methylbutanoate polyketide synthase]. The protein operates within polyketide biosynthesis; lovastatin biosynthesis. In terms of biological role, monacolin J acid methylbutanoyltransferase; part of the gene cluster that mediates the biosynthesis of lovastatin (also known as mevinolin, mevacor or monacolin K), a hypolipidemic inhibitor of (3S)-hydroxymethylglutaryl-coenzyme A (HMG-CoA) reductase (HMGR). The first step in the biosynthesis of lovastatin is the production of dihydromonacolin L acid by the lovastatin nonaketide synthase lovB and the trans-acting enoyl reductase lovC via condensation of one acetyl-CoA unit and 8 malonyl-CoA units. Dihydromonacolin L acid is released from lovB by the thioesterase lovG. Next, dihydromonacolin L acid is oxidized by the dihydromonacolin L monooxygenase lovA twice to form monacolin J acid. The 2-methylbutyrate moiety of lovastatin is synthesized by the lovastatin diketide synthase lovF via condensation of one acetyl-CoA unit and one malonyl-CoA unit. Finally, the covalent attachment of this moiety to monacolin J acid is catalyzed by the transesterase lovD to yield lovastatin. LovD has broad substrate specificity and can also convert monacolin J to simvastatin using alpha-dimethylbutanoyl-S-methyl-3-mercaptopropionate (DMB-S-MMP) as the thioester acyl donor, and can also catalyze the reverse reaction and function as hydrolase in vitro. LovD has much higher activity with LovF-bound 2-methylbutanoate than with free diketide substrates. This chain is Monacolin J acid methylbutanoyltransferase, found in Aspergillus terreus.